The sequence spans 698 residues: Elongation factor G 1 (698 aa).

One can recognise a tr-type G domain in the interval 8-290 (ERYRNIGICA…AVIEFLPSPT (283 aa)). Residues 17 to 24 (AHVDAGKT), 88 to 92 (DTPGH), and 142 to 145 (NKMD) each bind GTP.

The protein belongs to the TRAFAC class translation factor GTPase superfamily. Classic translation factor GTPase family. EF-G/EF-2 subfamily.

Its subcellular location is the cytoplasm. Functionally, catalyzes the GTP-dependent ribosomal translocation step during translation elongation. During this step, the ribosome changes from the pre-translocational (PRE) to the post-translocational (POST) state as the newly formed A-site-bound peptidyl-tRNA and P-site-bound deacylated tRNA move to the P and E sites, respectively. Catalyzes the coordinated movement of the two tRNA molecules, the mRNA and conformational changes in the ribosome. The protein is Elongation factor G 1 of Vibrio cholerae serotype O1 (strain ATCC 39315 / El Tor Inaba N16961).